A 100-amino-acid chain; its full sequence is Cytochrome bo(3) ubiquinol oxidase subunit 4 (100 aa).

Topologically, residues 1–9 are cytoplasmic; it reads MLKNRYLKY. The chain crosses the membrane as a helical span at residues 10–32; the sequence is LFILILLSILSIMPIFAIIYRIF. Topologically, residues 33-36 are extracellular; sequence SRNY. Residues 37-59 traverse the membrane as a helical segment; sequence LYAFIIVCLFFQILAHIKFFLNL. The Cytoplasmic portion of the chain corresponds to 60–68; it reads DFSLEQRWK. Residues 69–90 form a helical membrane-spanning segment; that stretch reads LISVIFSLVVGLIILLGSIWVI. The Extracellular portion of the chain corresponds to 91 to 100; that stretch reads KNLNNNLCIM.

This sequence belongs to the cytochrome c oxidase bacterial subunit 4 family. Heterooctamer of two A chains, two B chains, two C chains and two D chains.

Its subcellular location is the cell membrane. In terms of biological role, cytochrome bo(3) ubiquinol terminal oxidase is the component of the aerobic respiratory chain of E.coli that predominates when cells are grown at high aeration. Has proton pump activity across the membrane in addition to electron transfer, pumping 2 protons/electron. This is Cytochrome bo(3) ubiquinol oxidase subunit 4 (cyoD) from Buchnera aphidicola subsp. Baizongia pistaciae (strain Bp).